Consider the following 570-residue polypeptide: Mitoguardin 1 (570 aa).

The chain crosses the membrane as a helical span at residues 34–54 (GLKKIIAVAAISGVSLIFLAC).

This sequence belongs to the mitoguardin family. As to quaternary structure, homodimer and heterodimer; forms heterodimers with miga2.

The protein localises to the mitochondrion outer membrane. Functionally, regulator of mitochondrial fusion: acts by forming homo- and heterodimers at the mitochondrial outer membrane and facilitating the formation of pld6/MitoPLD dimers. May act by regulating phospholipid metabolism via pld6/MitoPLD. In Xenopus laevis (African clawed frog), this protein is Mitoguardin 1.